We begin with the raw amino-acid sequence, 198 residues long: Nucleoside triphosphate pyrophosphatase (198 aa).

Asp-72 (proton acceptor) is an active-site residue.

It belongs to the Maf family. A divalent metal cation is required as a cofactor.

It localises to the cytoplasm. The enzyme catalyses a ribonucleoside 5'-triphosphate + H2O = a ribonucleoside 5'-phosphate + diphosphate + H(+). It catalyses the reaction a 2'-deoxyribonucleoside 5'-triphosphate + H2O = a 2'-deoxyribonucleoside 5'-phosphate + diphosphate + H(+). Functionally, nucleoside triphosphate pyrophosphatase. May have a dual role in cell division arrest and in preventing the incorporation of modified nucleotides into cellular nucleic acids. This is Nucleoside triphosphate pyrophosphatase from Corynebacterium diphtheriae (strain ATCC 700971 / NCTC 13129 / Biotype gravis).